Consider the following 203-residue polypeptide: Large ribosomal subunit protein bL25 (203 aa).

This sequence belongs to the bacterial ribosomal protein bL25 family. CTC subfamily. Part of the 50S ribosomal subunit; part of the 5S rRNA/L5/L18/L25 subcomplex. Contacts the 5S rRNA. Binds to the 5S rRNA independently of L5 and L18.

Its function is as follows. This is one of the proteins that binds to the 5S RNA in the ribosome where it forms part of the central protuberance. This Dechloromonas aromatica (strain RCB) protein is Large ribosomal subunit protein bL25.